The sequence spans 283 residues: Nucleotide-binding protein IL0393 (283 aa).

ATP is bound at residue 8 to 15 (GRSGSGKT). A GTP-binding site is contributed by 56–59 (DVRN).

This sequence belongs to the RapZ-like family.

Functionally, displays ATPase and GTPase activities. The sequence is that of Nucleotide-binding protein IL0393 from Idiomarina loihiensis (strain ATCC BAA-735 / DSM 15497 / L2-TR).